Reading from the N-terminus, the 660-residue chain is Threonine--tRNA ligase (660 aa).

Residues 1 to 49 (MPDSIVHVKKGQRFLDVIKDKNVVAVKIDSVLHDLRDVAERDVDAIPVS) form the TGS domain. A catalytic region spans residues 225–554 (DHRRIIAEMD…LLEHYAGKLP (330 aa)). Cysteine 318, histidine 369, and histidine 531 together coordinate Zn(2+).

Belongs to the class-II aminoacyl-tRNA synthetase family. As to quaternary structure, homodimer. It depends on Zn(2+) as a cofactor.

The protein localises to the cytoplasm. It carries out the reaction tRNA(Thr) + L-threonine + ATP = L-threonyl-tRNA(Thr) + AMP + diphosphate + H(+). In terms of biological role, catalyzes the attachment of threonine to tRNA(Thr) in a two-step reaction: L-threonine is first activated by ATP to form Thr-AMP and then transferred to the acceptor end of tRNA(Thr). The polypeptide is Threonine--tRNA ligase (Thermoplasma acidophilum (strain ATCC 25905 / DSM 1728 / JCM 9062 / NBRC 15155 / AMRC-C165)).